The primary structure comprises 314 residues: tRNA pseudouridine synthase B (314 aa).

Residue His-43 coordinates substrate. The active-site Nucleophile is Asp-48. 3 residues coordinate substrate: Tyr-76, Tyr-179, and Leu-200.

The protein belongs to the pseudouridine synthase TruB family. Type 1 subfamily.

It catalyses the reaction uridine(55) in tRNA = pseudouridine(55) in tRNA. Its function is as follows. Responsible for synthesis of pseudouridine from uracil-55 in the psi GC loop of transfer RNAs. The chain is tRNA pseudouridine synthase B from Enterobacter sp. (strain 638).